A 557-amino-acid polypeptide reads, in one-letter code: Aerobic glycerol-3-phosphate dehydrogenase (557 aa).

21–49 (DVVIIGGGITGAGIALDASQRGMKVALVE) is a binding site for FAD.

The protein belongs to the FAD-dependent glycerol-3-phosphate dehydrogenase family. FAD is required as a cofactor.

The protein localises to the cytoplasm. The enzyme catalyses a quinone + sn-glycerol 3-phosphate = dihydroxyacetone phosphate + a quinol. It participates in polyol metabolism; glycerol degradation via glycerol kinase pathway; glycerone phosphate from sn-glycerol 3-phosphate (aerobic route): step 1/1. This Staphylococcus haemolyticus (strain JCSC1435) protein is Aerobic glycerol-3-phosphate dehydrogenase (glpD).